The chain runs to 399 residues: S-adenosylmethionine synthase (399 aa).

An ATP-binding site is contributed by His15. Asp17 contacts Mg(2+). K(+) is bound at residue Glu43. 2 residues coordinate L-methionine: Glu56 and Gln99. Residues 99 to 109 (QSPDIADGVDH) form a flexible loop region. Residues 175 to 177 (DAK), 242 to 243 (RF), Asp251, 257 to 258 (RK), Ala274, and Lys278 each bind ATP. Asp251 is a binding site for L-methionine. Lys282 is an L-methionine binding site.

Belongs to the AdoMet synthase family. Homotetramer; dimer of dimers. Mg(2+) serves as cofactor. It depends on K(+) as a cofactor.

Its subcellular location is the cytoplasm. It carries out the reaction L-methionine + ATP + H2O = S-adenosyl-L-methionine + phosphate + diphosphate. The protein operates within amino-acid biosynthesis; S-adenosyl-L-methionine biosynthesis; S-adenosyl-L-methionine from L-methionine: step 1/1. Its function is as follows. Catalyzes the formation of S-adenosylmethionine (AdoMet) from methionine and ATP. The overall synthetic reaction is composed of two sequential steps, AdoMet formation and the subsequent tripolyphosphate hydrolysis which occurs prior to release of AdoMet from the enzyme. The protein is S-adenosylmethionine synthase of Lactobacillus acidophilus (strain ATCC 700396 / NCK56 / N2 / NCFM).